The primary structure comprises 84 residues: U4-theraphotoxin-Hhn1a (84 aa).

The first 22 residues, 1–22, serve as a signal peptide directing secretion; sequence MKVTLIAILTCAAVLVLHTTAA. A propeptide spanning residues 23–47 is cleaved from the precursor; the sequence is EELEESQLMEVGMPDTELAAVDEER. 3 disulfide bridges follow: cysteine 51/cysteine 65, cysteine 55/cysteine 76, and cysteine 70/cysteine 81.

The protein belongs to the neurotoxin 12 (Hwtx-2) family. 02 (Hwtx-2) subfamily. As to expression, expressed by the venom gland.

The protein localises to the secreted. Functionally, postsynaptic neurotoxin. This Cyriopagopus hainanus (Chinese bird spider) protein is U4-theraphotoxin-Hhn1a.